The following is a 428-amino-acid chain: Aspartate--tRNA(Asp) ligase (428 aa).

Position 170 (Glu170) interacts with L-aspartate. The aspartate stretch occupies residues 192-195 (QLYK). Arg213 lines the L-aspartate pocket. ATP contacts are provided by residues 213–215 (RAE) and Glu351. Mg(2+) is bound by residues Glu351 and Ser354. The L-aspartate site is built by Ser354 and Arg358. ATP is bound at residue 399 to 402 (GFNR).

Belongs to the class-II aminoacyl-tRNA synthetase family. Type 2 subfamily. Homodimer. Requires Mg(2+) as cofactor.

It localises to the cytoplasm. It catalyses the reaction tRNA(Asp) + L-aspartate + ATP = L-aspartyl-tRNA(Asp) + AMP + diphosphate. In terms of biological role, catalyzes the attachment of L-aspartate to tRNA(Asp) in a two-step reaction: L-aspartate is first activated by ATP to form Asp-AMP and then transferred to the acceptor end of tRNA(Asp). The chain is Aspartate--tRNA(Asp) ligase from Pyrobaculum aerophilum (strain ATCC 51768 / DSM 7523 / JCM 9630 / CIP 104966 / NBRC 100827 / IM2).